Here is a 53-residue protein sequence, read N- to C-terminus: uncharacterized protein (53 aa).

It belongs to the ELIP/psbS family.

Its subcellular location is the plastid. It localises to the chloroplast. In terms of biological role, possible role in chlorophyll and/or carotenoid binding. This is an uncharacterized protein from Guillardia theta (Cryptophyte).